We begin with the raw amino-acid sequence, 414 residues long: MFRMLAKASVTLGSRAAGWVRTMGSYQLLVPPPEALSKPLSVPTRLLLGPGPSNLAPRVLAAGSLRMIGHMQKEMLQIMEEIKQGIQYVFQTRNPLTLVVSGSGHCAMETALFNLLEPGDSFLTGTNGIWGMRAAEIADRIGARVHQMIKKPGEHYTLQEVEEGLAQHKPVLLFLVHGESSTGVVQPLDGFGELCHRYQCLLLVDSVASLGGVPIYMDQQGIDIMYSSSQKVLNAPPGISLISFNDKAKYKVYSRKTKPVSFYTDITYLAKLWGCEGETRVIHHTTPVTSLYCLRESLALIAEQGLENCWRRHREATAHLHKHLQEMGLKFFVKDPEIRLPTITTVTVPAGYNWRDIVSYVLDHFSIEISGGLGPTEERVLRIGLLGYNATTENVDRVAEALREALQHCPKNKL.

The N-terminal 23 residues, 1-23, are a transit peptide targeting the mitochondrion; that stretch reads MFRMLAKASVTLGSRAAGWVRTM. Residue K231 is modified to N6-(pyridoxal phosphate)lysine. An N6-acetyllysine; alternate modification is found at K247. K247 is modified (N6-succinyllysine; alternate). Position 256 is an N6-acetyllysine (K256). K330 carries the post-translational modification N6-acetyllysine; alternate. Residue K330 is modified to N6-succinyllysine; alternate. An N6-acetyllysine modification is found at K334. R382 is a substrate binding site. The Microbody targeting signal signature appears at 412 to 414; it reads NKL.

It belongs to the class-V pyridoxal-phosphate-dependent aminotransferase family. In terms of assembly, homodimer. Pyridoxal 5'-phosphate is required as a cofactor.

It localises to the peroxisome. The protein localises to the mitochondrion matrix. The enzyme catalyses L-serine + pyruvate = 3-hydroxypyruvate + L-alanine. It carries out the reaction glyoxylate + L-alanine = glycine + pyruvate. Catalyzes the transamination of glyoxylate to glycine and contributes to the glyoxylate detoxification. In terms of biological role, catalyzes the transamination between L-serine and pyruvate and weakly contributes to gluconeogenesis from the L-serine metabolism. The sequence is that of Alanine--glyoxylate aminotransferase from Mus musculus (Mouse).